A 160-amino-acid polypeptide reads, in one-letter code: Ribonuclease P protein component 2 (160 aa).

This sequence belongs to the eukaryotic/archaeal RNase P protein component 2 family. Consists of a catalytic RNA component and at least 4-5 protein subunits.

It localises to the cytoplasm. The catalysed reaction is Endonucleolytic cleavage of RNA, removing 5'-extranucleotides from tRNA precursor.. Its function is as follows. Part of ribonuclease P, a protein complex that generates mature tRNA molecules by cleaving their 5'-ends. In Methanosphaerula palustris (strain ATCC BAA-1556 / DSM 19958 / E1-9c), this protein is Ribonuclease P protein component 2.